The chain runs to 958 residues: Atromentin synthetase greA (958 aa).

The adenylation (A) domain stretch occupies residues 60–465 (SIQTKTFSAF…SGRIKDTVIV (406 aa)). One can recognise a Carrier domain in the interval 597-675 (APSTETEKAL…SLANYVNALL (79 aa)). Residues 602–672 (TEKALAKIYA…VVSSLANYVN (71 aa)) are thiolation and peptide carrier (T) domain. Ser-634 bears the O-(pantetheine 4'-phosphoryl)serine mark. Residues 698–946 (PIFFVHPGVG…MDFDHVPQFQ (249 aa)) form a thioesterase (TE) domain region.

The protein belongs to the ATP-dependent AMP-binding enzyme family.

It functions in the pathway secondary metabolite biosynthesis. Functionally, an L-tyrosine:2-oxoglutarate aminotransferase and atromentin synthetase greA catalyze consecutive steps to turn over L-tyrosine into atromentin, which represents the generic precursor molecule for the entire terphenylquinone and pulvinic acid family of pigments, which are widely distributed secondary metabolites in homobasidiomycetes. The first step catalyzed by the aminotransferase converts L-tyrosine in to 4-hydroxyphenylpyruvate (4-HPP). Adenylation of two 4-HPP monomers by the greA adenylation (A) domain, covalent tethering of the monomers as a thioester and oxoester onto the greA thiolation (T) and thioesterase (TE) domains, respectively, and symmetric C-C-bond formation between two monomers catalyzed by the greA TE domain leads to atromentin. This Suillus grevillei (Larch bolete) protein is Atromentin synthetase greA (greA).